We begin with the raw amino-acid sequence, 330 residues long: MRYEVDTKRRIIKLVPEREEDLYFIYLLIDKGDIIRGWTVREYKPDGVKEGERIKIYLAIKVESLEYHKFRGSLRIRGTVVEVQDGIEGVKGRRHTFDVTPGREIEIEKAYDYPLDVVIEVLNMAKAVLPRVLLISVDDEETVFAYITALGVEILHTMYNTGRKDDSMFEEYFTAIKEVVDELKRRHKPDIVVLAGPSMIIEQASEYIQAIKVPQGSGGLAGVYEFIRGGLYEKFKIEMGINVYQRFIHKLSVDRLSVAIGLNEVREATDAGRIETVLVLDTLIKERPEDIWPLLAQVYKTRGKIHIVKEDSEVGAGLKAMGGVVALLRW.

The protein belongs to the eukaryotic release factor 1 family. Pelota subfamily. Monomer. A divalent metal cation serves as cofactor.

Its subcellular location is the cytoplasm. May function in recognizing stalled ribosomes, interact with stem-loop structures in stalled mRNA molecules, and effect endonucleolytic cleavage of the mRNA. May play a role in the release non-functional ribosomes and degradation of damaged mRNAs. Has endoribonuclease activity. This Pyrobaculum islandicum (strain DSM 4184 / JCM 9189 / GEO3) protein is Protein pelota homolog.